We begin with the raw amino-acid sequence, 486 residues long: F420-non-reducing hydrogenase iron-sulfur subunit A (486 aa).

Ni(2+) is bound by residues Cys61 and Cys64.

The protein belongs to the [NiFe]/[NiFeSe] hydrogenase large subunit family. In terms of assembly, the F420-non-reducing hydrogenase is composed of three subunits; MvhA, MvhD and MvhG. It forms a complex with the heterodisulfide reductase (Hdr). The cofactor is Ni(2+).

The protein resides in the cytoplasm. In terms of biological role, part of a complex that provides reducing equivalents for heterodisulfide reductase. This is F420-non-reducing hydrogenase iron-sulfur subunit A (mvhA) from Archaeoglobus profundus (strain DSM 5631 / JCM 9629 / NBRC 100127 / Av18).